Reading from the N-terminus, the 148-residue chain is Ubiquitin-conjugating enzyme E2 13 (148 aa).

The 147-residue stretch at 2-148 (ALPKRIIKEI…AREWTKKYAV (147 aa)) folds into the UBC core domain. The active-site Glycyl thioester intermediate is C86.

Belongs to the ubiquitin-conjugating enzyme family. In terms of assembly, heterodimer with spm2.

The enzyme catalyses S-ubiquitinyl-[E1 ubiquitin-activating enzyme]-L-cysteine + [E2 ubiquitin-conjugating enzyme]-L-cysteine = [E1 ubiquitin-activating enzyme]-L-cysteine + S-ubiquitinyl-[E2 ubiquitin-conjugating enzyme]-L-cysteine.. Its pathway is protein modification; protein ubiquitination. Functionally, has a role in the DNA error-free postreplication repair (PRR) pathway. The ubc13/spm2 heterodimer catalyzes the synthesis of non-canonical poly-ubiquitin chains that are linked through 'Lys-63'. The polypeptide is Ubiquitin-conjugating enzyme E2 13 (ubc13) (Schizosaccharomyces pombe (strain 972 / ATCC 24843) (Fission yeast)).